A 224-amino-acid chain; its full sequence is Transcription cofactor HES-6 (224 aa).

The interval 1-31 is disordered; sequence MAPSQAPSRDRAGQEDEDRWEARGDRKARKP. A compositionally biased stretch (basic and acidic residues) spans 8 to 25; the sequence is SRDRAGQEDEDRWEARGD. The 53-residue stretch at 25 to 77 folds into the bHLH domain; that stretch reads DRKARKPLVEKKRRARINESLQELRLLLAGTEVQAKLENAEVLELTVRRVQGA. The Orange domain occupies 96-129; it reads FAAGYIQCMHEVHTFVSTCQAIDATVSAELLNHL. The segment at 146-209 is disordered; the sequence is GDSLAGLPGG…GPDLVSTSLG (64 aa). Low complexity predominate over residues 158 to 171; it reads RSSWPPGGSPESPL. The segment covering 181 to 190 has biased composition (acidic residues); it reads LCSDLEEIPE. A WRPW motif motif is present at residues 221 to 224; it reads WRPW.

Transcription repression requires formation of a complex with a corepressor protein of the Groucho/TLE family. Interacts with HES1. In terms of tissue distribution, expressed in both undifferentiated and differentiated cells. High levels of expression are observed in several embryonic tissues including the nervous system, muscle and thymus. In the nervous system, initially expressed in the closing neural tube, then in the spinal cord, cranial and dorsal root ganglia, and brain neuroepithelium. Also expressed in epithelial cells of the embryonic respiratory, urinary and digestive systems. In the limb buds, expressed in skeletal muscle and presumptive tendons.

Its subcellular location is the nucleus. In terms of biological role, does not bind DNA itself but suppresses both HES1-mediated N box-dependent transcriptional repression and binding of HES1 to E box sequences. Also suppresses HES1-mediated inhibition of the heterodimer formed by ASCL1/MASH1 and TCF3/E47, allowing ASCL1 and TCF3 to up-regulate transcription in its presence. Promotes cell differentiation. This chain is Transcription cofactor HES-6, found in Mus musculus (Mouse).